The chain runs to 332 residues: tRNA dimethylallyltransferase (332 aa).

14–21 provides a ligand contact to ATP; sequence GPTASGKT. Substrate is bound at residue 16–21; it reads TASGKT. The segment at 39–42 is interaction with substrate tRNA; it reads DSMQ. The disordered stretch occupies residues 312-332; it reads NKRSSNHDCKRKHPRPSTREL. Residues 320–332 are compositionally biased toward basic residues; sequence CKRKHPRPSTREL.

Belongs to the IPP transferase family. Monomer. Mg(2+) is required as a cofactor.

The enzyme catalyses adenosine(37) in tRNA + dimethylallyl diphosphate = N(6)-dimethylallyladenosine(37) in tRNA + diphosphate. Its function is as follows. Catalyzes the transfer of a dimethylallyl group onto the adenine at position 37 in tRNAs that read codons beginning with uridine, leading to the formation of N6-(dimethylallyl)adenosine (i(6)A). The protein is tRNA dimethylallyltransferase of Staphylococcus epidermidis (strain ATCC 35984 / DSM 28319 / BCRC 17069 / CCUG 31568 / BM 3577 / RP62A).